A 108-amino-acid polypeptide reads, in one-letter code: Abscisic stress-ripening protein 3 (108 aa).

2 disordered regions span residues 1-34 (MAEE…HHSH) and 84-108 (FAFH…GRHH). A compositionally biased stretch (basic and acidic residues) spans 15-24 (NREEEGGPVD). Over residues 25 to 34 (HKKKVKHHSH) the composition is skewed to basic residues. The segment covering 95-108 (AKKEKKAAEKGRHH) has biased composition (basic and acidic residues).

Belongs to the abscisic acid and water stress-induced protein family.

The sequence is that of Abscisic stress-ripening protein 3 from Solanum lycopersicum (Tomato).